Here is a 248-residue protein sequence, read N- to C-terminus: UPF0736 protein BcerKBAB4_1085 (248 aa).

The protein belongs to the UPF0736 family.

This Bacillus mycoides (strain KBAB4) (Bacillus weihenstephanensis) protein is UPF0736 protein BcerKBAB4_1085.